A 159-amino-acid polypeptide reads, in one-letter code: Ribosomal RNA large subunit methyltransferase H (159 aa).

Residues Leu76, Gly108, and 127–132 (FSKMTF) each bind S-adenosyl-L-methionine.

Belongs to the RNA methyltransferase RlmH family. As to quaternary structure, homodimer.

It is found in the cytoplasm. It catalyses the reaction pseudouridine(1915) in 23S rRNA + S-adenosyl-L-methionine = N(3)-methylpseudouridine(1915) in 23S rRNA + S-adenosyl-L-homocysteine + H(+). Its function is as follows. Specifically methylates the pseudouridine at position 1915 (m3Psi1915) in 23S rRNA. This chain is Ribosomal RNA large subunit methyltransferase H, found in Staphylococcus aureus (strain MSSA476).